The chain runs to 497 residues: Envelope glycoprotein E (497 aa).

The Virion surface segment spans residues 1–398; it reads MCVFQILIIV…GTIIYDILLT (398 aa). Asn-60, Asn-133, Asn-148, Asn-203, Asn-277, Asn-366, and Asn-388 each carry an N-linked (GlcNAc...) asparagine; by host glycan. The chain crosses the membrane as a helical span at residues 399 to 419; that stretch reads SLSIGAIIIVIVGGVCIAILI. At 420–497 the chain is on the intravirion side; sequence RRRRRRRTRG…KIRKRLDLYH (78 aa).

This sequence belongs to the alphaherpesvirinae glycoprotein E family. In terms of assembly, interacts with gI. Phosphorylated within the acidic cluster. Phosphorylation determines whether endocytosed viral gE traffics to the trans-Golgi network or recycles to the cell membrane.

It localises to the virion membrane. Its subcellular location is the host cell membrane. It is found in the host cell junction. The protein resides in the host Golgi apparatus membrane. The protein localises to the host endosome membrane. In terms of biological role, in epithelial cells, the heterodimer gE/gI is required for the cell-to-cell spread of the virus, by sorting nascent virions to cell junctions. Once the virus reaches the cell junctions, virus particles can spread to adjacent cells extremely rapidly through interactions with cellular receptors that accumulate at these junctions. Implicated in basolateral spread in polarized cells. In neuronal cells, gE/gI is essential for the anterograde spread of the infection throughout the host nervous system. Together with US9, the heterodimer gE/gI is involved in the sorting and transport of viral structural components toward axon tips. This is Envelope glycoprotein E (MDV096) from Gallus gallus (Chicken).